The primary structure comprises 467 residues: tRNA dimethylallyltransferase (467 aa).

The transit peptide at 1–47 (MAAAAAARAVPVSSGFRGLRRTLPLVVILGATGTGKSTLALQLGQRL) directs the protein to the mitochondrion. Residue 32-37 (TGTGKS) coordinates dimethylallyl diphosphate. 2 interaction with substrate tRNA regions span residues 55-58 (DSMQ) and 183-187 (RKVAR). A core aggregation region region spans residues 221–230 (FPNPCILWLH). The tract at residues 233–255 (QAVLDERLDKRVDDMLAAGLLEE) is interaction with isopentenylpyrophosphate transferase. Interaction with substrate tRNA regions lie at residues 281–283 (QSI) and 313–331 (ALKQVTKRYARKQNRWVKN). The segment at 395–425 (HMCDLCDRIIIGDREWAAHLKSKSHLHQLKK) adopts a Matrin-type zinc-finger fold. Residues 432 to 467 (DAVSATGSQSNSPDCDPERIEGESSGQHNQELKASV) are disordered. Residues Ser-443 and Ser-455 each carry the phosphoserine modification.

Belongs to the IPP transferase family.

The protein localises to the mitochondrion. Its subcellular location is the cytoplasm. The protein resides in the nucleus. The enzyme catalyses adenosine(37) in tRNA + dimethylallyl diphosphate = N(6)-dimethylallyladenosine(37) in tRNA + diphosphate. Functionally, catalyzes the transfer of a dimethylallyl group onto the adenine at position 37 of both cytosolic and mitochondrial tRNAs, leading to the formation of N6-(dimethylallyl)adenosine (i6A37). Mediates modification of a limited subset of tRNAs: tRNA(Ser)(AGA), tRNA(Ser)(CGA), tRNA(Ser)(UGA), as well as partial modification of the selenocysteine tRNA(Ser)(UCA). TRIT1 is therefore required for selenoprotein expression. The polypeptide is tRNA dimethylallyltransferase (Trit1) (Mus musculus (Mouse)).